Reading from the N-terminus, the 266-residue chain is Arcelin-4 (266 aa).

Positions 1-21 are cleaved as a signal peptide; the sequence is MGSSKLLSLALLLVLLTHANS. Asn-28 and Asn-92 each carry an N-linked (GlcNAc...) asparagine glycan.

It belongs to the leguminous lectin family.

In terms of biological role, seed storage. This carbohydrate-binding lectin has toxic effects on the important bean bruchid pests, Z.subfasciatus and A.obtectus. In Phaseolus vulgaris (Kidney bean), this protein is Arcelin-4 (ARC4).